Reading from the N-terminus, the 123-residue chain is Small ribosomal subunit protein uS13 (123 aa).

The segment at 95–123 (GLPVRGQKTKTNARTRKGPKKAVASKKKK) is disordered.

The protein belongs to the universal ribosomal protein uS13 family. In terms of assembly, part of the 30S ribosomal subunit. Forms a loose heterodimer with protein S19. Forms two bridges to the 50S subunit in the 70S ribosome.

Its function is as follows. Located at the top of the head of the 30S subunit, it contacts several helices of the 16S rRNA. In the 70S ribosome it contacts the 23S rRNA (bridge B1a) and protein L5 of the 50S subunit (bridge B1b), connecting the 2 subunits; these bridges are implicated in subunit movement. Contacts the tRNAs in the A and P-sites. The protein is Small ribosomal subunit protein uS13 of Clostridium acetobutylicum (strain ATCC 824 / DSM 792 / JCM 1419 / IAM 19013 / LMG 5710 / NBRC 13948 / NRRL B-527 / VKM B-1787 / 2291 / W).